Here is a 471-residue protein sequence, read N- to C-terminus: MQPGVLAACLLLSWTHCWSLPLLNSNEDDDLSEEDFQFAESYLRSYYHPLNPAGILKKNAAGSMVDRLREMQSFFGLEVTGKLDDNTLAIMKQPRCGVPDVGEYNVFPRTLKWSQTNLTYRIVNYTPDLTHSEVEKAFKKAFKVWSDVTPLNFTRIHNGTADIMISFGTKEHGDFYPFDGPSGLLAHAFPPGPNYGGDAHFDDDETWTSSSKGYNLFLVAAHEFGHSLGLDHSKDPGALMFPIYTYTGKSHFMLPDDDVQGIQSLYGPGDEDPNPKHPKTPDKCDPSLSLDAITSLRGETMIFKDRFFWRLHPQQVDAELFLTKSFWPELPNRIDAAYEHPARDLIFIFRGKKFWAPNGYDILEGYPQKLSELGFPREVKKISAAVHFEDTGKTLFFSGNQVWSYDDTNHTMDQDYPRLIEEEFPGIGGKVDAVYEKNGYIYFFNGPIQFEYSIWSKRIVRVMPTNSLLWC.

The signal sequence occupies residues 1-19; the sequence is MQPGVLAACLLLSWTHCWS. The propeptide at 20-103 is activation peptide; the sequence is LPLLNSNEDD…PRCGVPDVGE (84 aa). The Cysteine switch signature appears at 94–101; it reads PRCGVPDV. Cysteine 96 contacts Zn(2+). A glycan (N-linked (GlcNAc...) asparagine) is linked at asparagine 117. Aspartate 128 is a binding site for Ca(2+). N-linked (GlcNAc...) asparagine glycans are attached at residues asparagine 152 and asparagine 158. Residue aspartate 162 participates in Ca(2+) binding. Zn(2+) is bound by residues histidine 172 and aspartate 174. An interaction with TIMP2 region spans residues 176–246; the sequence is YPFDGPSGLL…GALMFPIYTY (71 aa). Ca(2+)-binding residues include aspartate 179, glycine 180, serine 182, and leucine 184. Zn(2+) is bound at residue histidine 187. The Ca(2+) site is built by asparagine 194, glycine 196, and aspartate 198. Histidine 200 contributes to the Zn(2+) binding site. Positions 202, 203, and 205 each coordinate Ca(2+). Residue histidine 222 coordinates Zn(2+). Residue glutamate 223 is part of the active site. Zn(2+) contacts are provided by histidine 226, histidine 232, and methionine 240. The disordered stretch occupies residues 263-284; the sequence is QSLYGPGDEDPNPKHPKTPDKC. The interval 268–471 is interaction with collagen; sequence PGDEDPNPKH…VMPTNSLLWC (204 aa). Positions 273-284 are enriched in basic and acidic residues; that stretch reads PNPKHPKTPDKC. Hemopexin repeat units follow at residues 281–330, 331–377, 379–427, and 428–471; these read PDKC…WPEL, PNRI…GFPR, VKKI…FPGI, and GGKV…LLWC. Cysteines 284 and 471 form a disulfide. Ca(2+)-binding residues include aspartate 291, isoleucine 293, aspartate 335, and alanine 337. At tyrosine 366 the chain carries Phosphotyrosine; by PKDCC. Ca(2+) is bound by residues serine 383 and alanine 385. The N-linked (GlcNAc...) asparagine glycan is linked to asparagine 409. Residues aspartate 432 and valine 434 each contribute to the Ca(2+) site.

It belongs to the peptidase M10A family. Requires Ca(2+) as cofactor. Zn(2+) is required as a cofactor. In terms of processing, the proenzyme is activated by removal of the propeptide; this cleavage can be effected by other matrix metalloproteinases, such as MMP2, MMP3 and MMP14 and may involve several cleavage steps. Cleavage can also be autocatalytic, after partial maturation by another protease or after treatment with 4-aminophenylmercuric acetate (APMA) (in vitro). N-glycosylated. Post-translationally, tyrosine phosphorylated by PKDCC/VLK.

Its subcellular location is the secreted. The protein resides in the extracellular space. The protein localises to the extracellular matrix. Its function is as follows. Plays a role in the degradation of extracellular matrix proteins including fibrillar collagen, fibronectin, TNC and ACAN. Cleaves triple helical collagens, including type I, type II and type III collagen, but has the highest activity with soluble type II collagen. Can also degrade collagen type IV, type XIV and type X. May also function by activating or degrading key regulatory proteins, such as TGFB1 and CCN2. Plays a role in wound healing, tissue remodeling, cartilage degradation, bone development, bone mineralization and ossification. Required for normal embryonic bone development and ossification. Plays a role in the healing of bone fractures via endochondral ossification. Plays a role in wound healing, probably by a mechanism that involves proteolytic activation of TGFB1 and degradation of CCN2. Plays a role in keratinocyte migration during wound healing. May play a role in cell migration and in tumor cell invasion. This chain is Collagenase 3 (MMP13), found in Oryctolagus cuniculus (Rabbit).